The following is a 458-amino-acid chain: GDP-fucose protein O-fucosyltransferase 3 (458 aa).

The Cytoplasmic segment spans residues 1–11; the sequence is MRRISVKKLCS. The chain crosses the membrane as a helical; Signal-anchor for type II membrane protein span at residues 12-32; sequence FCLCACAFAFLVMTFQVIELL. Topologically, residues 33-458 are lumenal; it reads GQFEQTEHRQ…TQFWREVFTD (426 aa). 3 N-linked (GlcNAc...) asparagine glycosylation sites follow: Asn92, Asn150, and Asn300. Cys371 and Cys374 are joined by a disulfide. The N-linked (GlcNAc...) asparagine glycan is linked to Asn445.

It belongs to the glycosyltransferase 10 family.

It is found in the endoplasmic reticulum membrane. It catalyses the reaction L-threonyl-[protein] + GDP-beta-L-fucose = 3-O-(alpha-L-fucosyl)-L-threonyl-[protein] + GDP + H(+). It carries out the reaction L-seryl-[protein] + GDP-beta-L-fucose = 3-O-(alpha-L-fucosyl)-L-seryl-[protein] + GDP + H(+). It functions in the pathway protein modification; protein glycosylation. Functionally, protein O-fucosyltransferase that specifically catalyzes O-fucosylation of serine or threonine residues in EMI domains of target proteins. Attaches fucose through an O-glycosidic linkage. O-fucosylation of EMI domain-containing proteins may be required for facilitating protein folding and secretion. This is GDP-fucose protein O-fucosyltransferase 3 (fut10) from Danio rerio (Zebrafish).